The sequence spans 504 residues: Protein FMP42 (504 aa).

The Vacuolar portion of the chain corresponds to 1 to 11 (MTSTRTLRYAQ). A helical membrane pass occupies residues 12–32 (VACACIWCLFSAGIIFGFAAL). The Cytoplasmic portion of the chain corresponds to 33–64 (KPILISEGVYHELCDPKDGDRLLCTAQDLKLN). A helical transmembrane segment spans residues 65 to 85 (FIFALSATVTNIMALPVGKIL). The Vacuolar portion of the chain corresponds to 86–91 (DMYGPR). A helical transmembrane segment spans residues 92 to 112 (VCGIIGSCLLFLASGNFISAK). The Cytoplasmic portion of the chain corresponds to 113 to 119 (HLVSLWD). The chain crosses the membrane as a helical span at residues 120-140 (PYLVGYTLLAVAGPFVFISCF). Residues 141-150 (QLANSFPQRS) lie on the Vacuolar side of the membrane. A helical membrane pass occupies residues 151–171 (GTVLALLTGSFDSSSALFLLY). The Cytoplasmic portion of the chain corresponds to 172 to 186 (RLLYQNWFPTLNVSR). The chain crosses the membrane as a helical span at residues 187 to 207 (FFTLYLIVPVFILACQLTIMP). Over 208–302 (HSSYKTVNHI…KSAYEQIKSP (95 aa)) the chain is Vacuolar. A phosphoserine mark is found at Ser238, Ser249, and Ser269. A helical membrane pass occupies residues 303–323 (WFYLMLLFALVAMLRINYFIA). Topologically, residues 324–344 (TVRTQEEYLLNDPDLALKLNS) are cytoplasmic. A helical transmembrane segment spans residues 345 to 365 (IFDMLLPLGGAVSIPFIGLLL). Topologically, residues 366-385 (DHTDTLSTLTILFTTSTAIG) are vacuolar. The chain crosses the membrane as a helical span at residues 386 to 406 (VFGLIPNSFTWNLIGIVLLVV). Residues 407 to 421 (YRPFYYTVVSDYSSK) are Cytoplasmic-facing. Residues 422–442 (VFGFDTFGTVYGLLSCICGIF) form a helical membrane-spanning segment. Residues 443–462 (NMSQNLLDKWTHTTFNMNPF) are Vacuolar-facing. Residues 463–483 (PINLTLVILTVVFSLTLTFYI) form a helical membrane-spanning segment. The Cytoplasmic segment spans residues 484 to 504 (RSQILPKPVNERGLSSNYQTI).

Belongs to the SLC43A transporter (TC 2.A.1.44) family.

The protein localises to the vacuole membrane. This Saccharomyces cerevisiae (strain ATCC 204508 / S288c) (Baker's yeast) protein is Protein FMP42 (FMP42).